A 496-amino-acid chain; its full sequence is Ganglioside-induced differentiation-associated protein 2 (496 aa).

2 disordered regions span residues 22–45 (VRDG…GLHS) and 252–271 (PERQ…DSEE). One can recognise a Macro domain in the interval 44–224 (HSPFPYRNDI…TYRRLLPLYF (181 aa)). Basic and acidic residues predominate over residues 254–264 (RQIRISEKPGG). The region spanning 329–483 (DLSDIAALKA…FVLDYDAREN (155 aa)) is the CRAL-TRIO domain.

It belongs to the GDAP2 family.

This Xenopus tropicalis (Western clawed frog) protein is Ganglioside-induced differentiation-associated protein 2.